A 342-amino-acid chain; its full sequence is Replication factor C subunit 4 (342 aa).

ATP is bound by residues V24, V36, 61–68 (GMPGIGKT), N157, and R215.

Belongs to the activator 1 small subunits family. Heteropentamer of subunits rfc1, rfc2, rfc3, rfc4 and rfc5 that forms a complex (RFC) with PCNA in the presence of ATP. Two other complexes exist where rfc1 can be replaced by either ctf18 or elg1 to form the ctf18-RFC or the elg1-RFC complexes respectively.

Its subcellular location is the nucleus. The elongation of primed DNA templates by DNA polymerase delta and epsilon requires the action of the accessory proteins PCNA and activator 1. This chain is Replication factor C subunit 4 (rfc4), found in Schizosaccharomyces pombe (strain 972 / ATCC 24843) (Fission yeast).